Here is a 317-residue protein sequence, read N- to C-terminus: Ribosomal protein L11 methyltransferase (317 aa).

Residues Thr-158, Gly-179, Asp-201, and Asn-244 each coordinate S-adenosyl-L-methionine.

The protein belongs to the methyltransferase superfamily. PrmA family.

The protein resides in the cytoplasm. It catalyses the reaction L-lysyl-[protein] + 3 S-adenosyl-L-methionine = N(6),N(6),N(6)-trimethyl-L-lysyl-[protein] + 3 S-adenosyl-L-homocysteine + 3 H(+). In terms of biological role, methylates ribosomal protein L11. This is Ribosomal protein L11 methyltransferase from Streptococcus pyogenes serotype M49 (strain NZ131).